We begin with the raw amino-acid sequence, 185 residues long: Dual specificity protein phosphatase 3 (185 aa).

The Tyrosine-protein phosphatase domain occupies 28–179 (QPCNEVTPRI…LCQLNDRLAK (152 aa)). The Phosphocysteine intermediate role is filled by cysteine 124.

It belongs to the protein-tyrosine phosphatase family. Non-receptor class dual specificity subfamily. As to quaternary structure, microtubule inner protein component of sperm flagellar doublet microtubules. Interacts with VRK3; this interaction activates DUSP3 phosphatase activity.

The protein resides in the nucleus. Its subcellular location is the cytoplasm. It is found in the cytoskeleton. It localises to the flagellum axoneme. The enzyme catalyses O-phospho-L-tyrosyl-[protein] + H2O = L-tyrosyl-[protein] + phosphate. It carries out the reaction O-phospho-L-seryl-[protein] + H2O = L-seryl-[protein] + phosphate. It catalyses the reaction O-phospho-L-threonyl-[protein] + H2O = L-threonyl-[protein] + phosphate. In terms of biological role, shows activity both for tyrosine-protein phosphate and serine-protein phosphate, but displays a strong preference toward phosphotyrosines. Specifically dephosphorylates and inactivates ERK1 and ERK2. This is Dual specificity protein phosphatase 3 (DUSP3) from Homo sapiens (Human).